Consider the following 687-residue polypeptide: Chloride channel protein ClC-Ka (687 aa).

5 helical membrane passes run 52–72, 94–114, 161–181, 204–224, and 236–256; these read FLVALGVLMALISYAMNFAIG, LSWTVYPVALLSFSSGFSQSI, IFLGKVGPFVHLSVMISAYLG, AAAVGVATVFAAPFSGVLFSI, and YWRGFFAATCGAFMFRLLGVF. Residues Glu259, Glu261, Asp278, and Glu281 each coordinate Ca(2+). Helical transmembrane passes span 282–302, 325–345, 396–416, 417–437, 458–478, and 486–506; these read IFFFVALGFICGVLSCAYLFC, PSYAALVALVLASITYPPGVG, FTIFGTLAFFLVMKFWMLILA, TTIPMPAGYFMPIFIIGAAIG, VNPIMPGGYALAGAAAFSGAV, and LLAFELTGQIVHALPVLMAVL. Residues 507–687 are Cytoplasmic-facing; it reads AANAISQNCQ…STLINPPAPK (181 aa). 2 consecutive CBS domains span residues 551–609 and 626–687; these read MNCN…QPAS and CPTQ…PAPK.

The protein belongs to the chloride channel (TC 2.A.49) family. CLCNKA subfamily. Homodimer. Interacts with BSND. Expressed predominantly in the kidney. Expressed strongly in the cortical thick ascending limb and the distal convoluted tubule, with minor expression in the S3 segment of the proximal tubule and the cortical collecting tubule.

It is found in the basolateral cell membrane. It catalyses the reaction chloride(in) = chloride(out). It carries out the reaction bromide(in) = bromide(out). The catalysed reaction is nitrate(in) = nitrate(out). The enzyme catalyses iodide(out) = iodide(in). With respect to regulation, activated by extracellular Ca(2+) and inhibited by extracellular acidic pH. Functionally, anion-selective channel permeable to small monovalent anions with ion selectivity for chloride &gt; bromide &gt; nitrate &gt; iodide. Forms a homodimeric channel where each subunit has its own ion conduction pathway. Conducts double-barreled currents controlled by two types of gates, two fast gates that control each subunit independently and a slow common gate that opens and shuts off both subunits simultaneously. Assembles with the regulatory subunit BSND/Barttin for sorting at the basolateral plasma membrane domain. CLCNKA:BSND channels are activated upon membrane hyperpolarization mostly controlled by fast gating. Mediates transepithelial chloride transport from the lumen to interstitial compartment along the thin ascending limb of Henle's loop, contributing to generation of hypertonic medullary interstitium as a countercurrent system to achieve urine concentration. Conducts chloride currents in the stria vascularis of the inner ear to establish the endocochlear potential necessary for normal hearing. The chain is Chloride channel protein ClC-Ka from Rattus norvegicus (Rat).